A 148-amino-acid polypeptide reads, in one-letter code: Putative nickel-responsive regulator (148 aa).

Ni(2+) is bound by residues His88, His99, His101, and Cys107.

This sequence belongs to the transcriptional regulatory CopG/NikR family. Homotetramer. Requires Ni(2+) as cofactor.

Its function is as follows. Transcriptional regulator. The protein is Putative nickel-responsive regulator of Helicobacter pylori (strain J99 / ATCC 700824) (Campylobacter pylori J99).